The sequence spans 579 residues: Probable pectinesterase/pectinesterase inhibitor 7 (579 aa).

The N-terminal stretch at 1–20 (MESPIFILITLSFFLQSVLA) is a signal peptide. A pectinesterase inhibitor 7 region spans residues 22 to 185 (SQTLSNSSTI…TKLLGVSLAL (164 aa)). N-linked (GlcNAc...) asparagine glycosylation is found at Asn27, Asn115, Asn174, Asn274, Asn277, Asn287, Asn326, and Asn333. The tract at residues 265–564 (VTVSQDGTGN…TVTGLFIEAD (300 aa)) is pectinesterase 7. Thr342 serves as a coordination point for substrate. N-linked (GlcNAc...) asparagine glycosylation is present at Asn359. A substrate-binding site is contributed by Gln372. Asp395 serves as the catalytic Proton donor; for pectinesterase activity. An intrachain disulfide couples Cys409 to Cys429. Catalysis depends on Asp416, which acts as the Nucleophile; for pectinesterase activity. Residues Asn462 and Asn475 are each glycosylated (N-linked (GlcNAc...) asparagine). The substrate site is built by Arg484 and Trp486. N-linked (GlcNAc...) asparagine glycosylation is found at Asn526, Asn533, Asn547, and Asn553.

It in the N-terminal section; belongs to the PMEI family. In the C-terminal section; belongs to the pectinesterase family. As to expression, expressed in siliques.

Its subcellular location is the secreted. It is found in the cell wall. The catalysed reaction is [(1-&gt;4)-alpha-D-galacturonosyl methyl ester](n) + n H2O = [(1-&gt;4)-alpha-D-galacturonosyl](n) + n methanol + n H(+). It participates in glycan metabolism; pectin degradation; 2-dehydro-3-deoxy-D-gluconate from pectin: step 1/5. In terms of biological role, acts in the modification of cell walls via demethylesterification of cell wall pectin. The sequence is that of Probable pectinesterase/pectinesterase inhibitor 7 (PME7) from Arabidopsis thaliana (Mouse-ear cress).